The following is a 191-amino-acid chain: Ribonuclease HII (191 aa).

The RNase H type-2 domain occupies 16–191; that stretch reads INLIGIDEAG…KLHRKSFKLL (176 aa). A divalent metal cation-binding residues include Asp-22, Glu-23, and Asp-110.

The protein belongs to the RNase HII family. Mn(2+) is required as a cofactor. It depends on Mg(2+) as a cofactor.

It is found in the cytoplasm. It carries out the reaction Endonucleolytic cleavage to 5'-phosphomonoester.. Functionally, endonuclease that specifically degrades the RNA of RNA-DNA hybrids. The chain is Ribonuclease HII (rnhB) from Campylobacter jejuni subsp. jejuni serotype O:2 (strain ATCC 700819 / NCTC 11168).